A 51-amino-acid polypeptide reads, in one-letter code: Epididymal sperm protein E (51 aa).

A zinc finger spans residues 8–39 (CVRCRRKTPSFNSKTVTFRNKRRAIRSHCAYC).

In terms of tissue distribution, sperm.

It is found in the nucleus. This is Epididymal sperm protein E from Sepia officinalis (Common cuttlefish).